A 503-amino-acid polypeptide reads, in one-letter code: ATP synthase subunit alpha (503 aa).

Residue 170 to 177 (GDKQTGKT) coordinates ATP.

The protein belongs to the ATPase alpha/beta chains family. In terms of assembly, F-type ATPases have 2 components, CF(1) - the catalytic core - and CF(0) - the membrane proton channel. CF(1) has five subunits: alpha(3), beta(3), gamma(1), delta(1), epsilon(1). CF(0) has three main subunits: a(1), b(2) and c(9-12). The alpha and beta chains form an alternating ring which encloses part of the gamma chain. CF(1) is attached to CF(0) by a central stalk formed by the gamma and epsilon chains, while a peripheral stalk is formed by the delta and b chains.

It is found in the cell inner membrane. The catalysed reaction is ATP + H2O + 4 H(+)(in) = ADP + phosphate + 5 H(+)(out). Functionally, produces ATP from ADP in the presence of a proton gradient across the membrane. The alpha chain is a regulatory subunit. In Helicobacter acinonychis (strain Sheeba), this protein is ATP synthase subunit alpha.